Consider the following 332-residue polypeptide: Beta-ketoacyl-[acyl-carrier-protein] synthase III (332 aa).

Active-site residues include Cys-116 and His-255. Residues 256–260 (QANLR) are ACP-binding. Asn-285 is a catalytic residue.

This sequence belongs to the thiolase-like superfamily. FabH family. In terms of assembly, homodimer.

It localises to the cytoplasm. The catalysed reaction is malonyl-[ACP] + acetyl-CoA + H(+) = 3-oxobutanoyl-[ACP] + CO2 + CoA. It participates in lipid metabolism; fatty acid biosynthesis. Catalyzes the condensation reaction of fatty acid synthesis by the addition to an acyl acceptor of two carbons from malonyl-ACP. Catalyzes the first condensation reaction which initiates fatty acid synthesis and may therefore play a role in governing the total rate of fatty acid production. Possesses both acetoacetyl-ACP synthase and acetyl transacylase activities. Its substrate specificity determines the biosynthesis of branched-chain and/or straight-chain of fatty acids. This is Beta-ketoacyl-[acyl-carrier-protein] synthase III from Helicobacter hepaticus (strain ATCC 51449 / 3B1).